A 424-amino-acid chain; its full sequence is Adenylosuccinate synthetase (424 aa).

GTP is bound by residues 12-18 and 40-42; these read GDEGKGK and GHT. Asp-13 serves as the catalytic Proton acceptor. 2 residues coordinate Mg(2+): Asp-13 and Gly-40. IMP-binding positions include 13–16, 38–41, Thr-128, Arg-142, Gln-223, Thr-238, and Arg-302; these read DEGK and NAGH. The active-site Proton donor is the His-41. Residue 298-304 participates in substrate binding; it reads TTTGRPR. GTP-binding positions include Arg-304, 330 to 332, and 412 to 414; these read HVD and GVG.

This sequence belongs to the adenylosuccinate synthetase family. Homodimer. Mg(2+) serves as cofactor.

It localises to the cytoplasm. The catalysed reaction is IMP + L-aspartate + GTP = N(6)-(1,2-dicarboxyethyl)-AMP + GDP + phosphate + 2 H(+). Its pathway is purine metabolism; AMP biosynthesis via de novo pathway; AMP from IMP: step 1/2. In terms of biological role, plays an important role in the de novo pathway of purine nucleotide biosynthesis. Catalyzes the first committed step in the biosynthesis of AMP from IMP. The protein is Adenylosuccinate synthetase of Acetivibrio thermocellus (strain ATCC 27405 / DSM 1237 / JCM 9322 / NBRC 103400 / NCIMB 10682 / NRRL B-4536 / VPI 7372) (Clostridium thermocellum).